A 288-amino-acid chain; its full sequence is Light-independent protochlorophyllide reductase iron-sulfur ATP-binding protein (288 aa).

Residues 10 to 15 (GIGKST) and K39 each bind ATP. S14 is a Mg(2+) binding site. C95 and C129 together coordinate [4Fe-4S] cluster. 180-181 (NR) contributes to the ATP binding site.

Belongs to the NifH/BchL/ChlL family. As to quaternary structure, homodimer. Protochlorophyllide reductase is composed of three subunits; ChlL, ChlN and ChlB. Requires [4Fe-4S] cluster as cofactor.

It catalyses the reaction chlorophyllide a + oxidized 2[4Fe-4S]-[ferredoxin] + 2 ADP + 2 phosphate = protochlorophyllide a + reduced 2[4Fe-4S]-[ferredoxin] + 2 ATP + 2 H2O. It functions in the pathway porphyrin-containing compound metabolism; chlorophyll biosynthesis (light-independent). In terms of biological role, component of the dark-operative protochlorophyllide reductase (DPOR) that uses Mg-ATP and reduced ferredoxin to reduce ring D of protochlorophyllide (Pchlide) to form chlorophyllide a (Chlide). This reaction is light-independent. The L component serves as a unique electron donor to the NB-component of the complex, and binds Mg-ATP. The sequence is that of Light-independent protochlorophyllide reductase iron-sulfur ATP-binding protein from Nostoc sp. (strain PCC 7120 / SAG 25.82 / UTEX 2576).